A 130-amino-acid polypeptide reads, in one-letter code: Small ribosomal subunit protein uS8 (130 aa).

This sequence belongs to the universal ribosomal protein uS8 family. Part of the 30S ribosomal subunit. Contacts proteins S5 and S12.

Functionally, one of the primary rRNA binding proteins, it binds directly to 16S rRNA central domain where it helps coordinate assembly of the platform of the 30S subunit. The chain is Small ribosomal subunit protein uS8 from Buchnera aphidicola subsp. Acyrthosiphon kondoi (Acyrthosiphon kondoi symbiotic bacterium).